A 311-amino-acid chain; its full sequence is Probable manganese-dependent inorganic pyrophosphatase (311 aa).

Mn(2+)-binding residues include H9, D13, D15, D77, H99, and D151.

It belongs to the PPase class C family. It depends on Mn(2+) as a cofactor.

The protein resides in the cytoplasm. It catalyses the reaction diphosphate + H2O = 2 phosphate + H(+). The sequence is that of Probable manganese-dependent inorganic pyrophosphatase from Streptococcus pyogenes serotype M49 (strain NZ131).